A 2514-amino-acid chain; its full sequence is Probable polyketide synthase 8/35 (2514 aa).

The 432-residue stretch at 11-442 folds into the Ketosynthase family 3 (KS3) domain; that stretch reads DKGVAIVGVG…GSNCCLLISE (432 aa). Residues cysteine 181, histidine 323, and histidine 362 each act as for beta-ketoacyl synthase activity in the active site. The segment at 635-668 is acyl/malonyl transferase; sequence GVNPSFILGHSLGEISAAYCSGMIDLDTFCYTVY. The For acyl/malonyl transferase activity role is filled by serine 645. The interval 925–1047 is N-terminal hotdog fold; it reads IDHLGLSNSY…ANFQLLDHGN (123 aa). Positions 925-1209 constitute a PKS/mFAS DH domain; sequence IDHLGLSNSY…FKSLIPIKHS (285 aa). The active-site Proton acceptor; for dehydratase activity is histidine 959. A C-terminal hotdog fold region spans residues 1064-1209; sequence NLSKLTKNEL…FKSLIPIKHS (146 aa). The Proton donor; for dehydratase activity role is filled by aspartate 1122. The Carrier domain occupies 2431–2508; the sequence is IGNKNIDELF…ISIKMILNSL (78 aa). Residue serine 2468 is modified to O-(pantetheine 4'-phosphoryl)serine.

Pantetheine 4'-phosphate is required as a cofactor.

Probable polyketide synthase. This chain is Probable polyketide synthase 8/35 (pks8), found in Dictyostelium discoideum (Social amoeba).